The chain runs to 432 residues: Acyl-coenzyme A thioesterase 3 (432 aa).

Residues Ser-243, Asp-337, and His-371 each act as charge relay system in the active site. The short motif at 430-432 (AKL) is the Microbody targeting signal element.

Belongs to the C/M/P thioester hydrolase family. As to expression, widely expressed. Highly expressed in the kidney, expressed at low level in the liver. Isoform 2 is expressed in the kidney, but not in the liver. Isoform 1 is liver-specific. Highly expressed in kidney (at protein level).

It is found in the peroxisome. The catalysed reaction is hexadecanoyl-CoA + H2O = hexadecanoate + CoA + H(+). It catalyses the reaction decanoyl-CoA + H2O = decanoate + CoA + H(+). It carries out the reaction dodecanoyl-CoA + H2O = dodecanoate + CoA + H(+). The enzyme catalyses tetradecanoyl-CoA + H2O = tetradecanoate + CoA + H(+). The catalysed reaction is octadecanoyl-CoA + H2O = octadecanoate + CoA + H(+). It catalyses the reaction eicosanoyl-CoA + H2O = eicosanoate + CoA + H(+). It carries out the reaction (9Z)-octadecenoyl-CoA + H2O = (9Z)-octadecenoate + CoA + H(+). The enzyme catalyses (9Z,12Z)-octadecadienoyl-CoA + H2O = (9Z,12Z)-octadecadienoate + CoA + H(+). The catalysed reaction is (5Z,8Z,11Z,14Z)-eicosatetraenoyl-CoA + H2O = (5Z,8Z,11Z,14Z)-eicosatetraenoate + CoA + H(+). It catalyses the reaction tetracosanoyl-CoA + H2O = tetracosanoate + CoA + H(+). It carries out the reaction hexacosanoyl-CoA + H2O = hexacosanoate + CoA + H(+). The enzyme catalyses docosanoyl-CoA + H2O = docosanoate + CoA + H(+). The catalysed reaction is (9Z)-hexadecenoyl-CoA + H2O = (9Z)-hexadecenoate + CoA + H(+). The protein operates within lipid metabolism; fatty acid metabolism. Catalyzes the hydrolysis of acyl-CoAs into free fatty acids and coenzyme A (CoASH), regulating their respective intracellular levels. Mainly active on long-chain acyl-CoAs. May have a function in termination of beta-oxidation of fatty acids. The protein is Acyl-coenzyme A thioesterase 3 (Acot3) of Mus musculus (Mouse).